The following is a 131-amino-acid chain: Holo-[acyl-carrier-protein] synthase (131 aa).

Mg(2+) is bound by residues Asp-8 and Glu-58.

Belongs to the P-Pant transferase superfamily. AcpS family. Mg(2+) serves as cofactor.

The protein resides in the cytoplasm. It catalyses the reaction apo-[ACP] + CoA = holo-[ACP] + adenosine 3',5'-bisphosphate + H(+). In terms of biological role, transfers the 4'-phosphopantetheine moiety from coenzyme A to a Ser of acyl-carrier-protein. This is Holo-[acyl-carrier-protein] synthase from Oenococcus oeni (strain ATCC BAA-331 / PSU-1).